The chain runs to 294 residues: Homeobox-leucine zipper protein ATHB-13 (294 aa).

The homeobox DNA-binding region spans 82 to 141 (MGEKKRRLNMEQVKTLEKNFELGNKLEPERKMQLARALGLQPRQIAIWFQNRRARWKTKQ). A leucine-zipper region spans residues 142–177 (LEKDYDTLKRQFDTLKAENDLLQTHNQKLQAEIMGL). Positions 181–246 (EQTESINLNK…FFPPSPATAT (66 aa)) are disordered. Positions 197 to 210 (SNRSDNSSDNLRLD) are enriched in low complexity. Over residues 214-223 (APPSNDSTLT) the composition is skewed to polar residues.

This sequence belongs to the HD-ZIP homeobox family. Class I subfamily. As to expression, predominantly expressed in leaves and flowers.

The protein localises to the nucleus. In terms of biological role, probable transcription factor that may act in the sucrose-signaling pathway. This chain is Homeobox-leucine zipper protein ATHB-13 (ATHB-13), found in Arabidopsis thaliana (Mouse-ear cress).